Reading from the N-terminus, the 281-residue chain is NADPH-dependent 7-cyano-7-deazaguanine reductase (281 aa).

81–83 (IES) is a binding site for substrate. Residue 83-84 (SK) participates in NADPH binding. C188 functions as the Thioimide intermediate in the catalytic mechanism. The Proton donor role is filled by D195. Residue 227–228 (HE) participates in substrate binding. An NADPH-binding site is contributed by 256–257 (RG).

It belongs to the GTP cyclohydrolase I family. QueF type 2 subfamily. Homodimer.

It localises to the cytoplasm. The catalysed reaction is 7-aminomethyl-7-carbaguanine + 2 NADP(+) = 7-cyano-7-deazaguanine + 2 NADPH + 3 H(+). It participates in tRNA modification; tRNA-queuosine biosynthesis. In terms of biological role, catalyzes the NADPH-dependent reduction of 7-cyano-7-deazaguanine (preQ0) to 7-aminomethyl-7-deazaguanine (preQ1). This is NADPH-dependent 7-cyano-7-deazaguanine reductase from Paracidovorax citrulli (strain AAC00-1) (Acidovorax citrulli).